Reading from the N-terminus, the 763-residue chain is Phosphoglycerol transferase I (763 aa).

A run of 4 helical transmembrane segments spans residues 1 to 21, 26 to 46, 77 to 97, and 108 to 128; these read MSEL…AWKA, WWFA…ITLY, ILPG…LGWI, and VGYS…SPAF.

This sequence belongs to the OpgB family.

Its subcellular location is the cell inner membrane. It catalyses the reaction a phosphatidylglycerol + a membrane-derived-oligosaccharide D-glucose = a 1,2-diacyl-sn-glycerol + a membrane-derived-oligosaccharide 6-(glycerophospho)-D-glucose.. Its pathway is glycan metabolism; osmoregulated periplasmic glucan (OPG) biosynthesis. Its function is as follows. Transfers a phosphoglycerol residue from phosphatidylglycerol to the membrane-bound nascent glucan backbones. The polypeptide is Phosphoglycerol transferase I (Salmonella newport (strain SL254)).